We begin with the raw amino-acid sequence, 82 residues long: ATP synthase subunit c (82 aa).

The next 2 helical transmembrane spans lie at 3–23 and 57–77; these read PLIA…ASLG and LAFM…LLFA.

As to quaternary structure, F-type ATPases have 2 components, F(1) - the catalytic core - and F(0) - the membrane proton channel. F(1) has five subunits: alpha(3), beta(3), gamma(1), delta(1), epsilon(1). F(0) has four main subunits: a(1), b(1), b'(1) and c(10-14). The alpha and beta chains form an alternating ring which encloses part of the gamma chain. F(1) is attached to F(0) by a central stalk formed by the gamma and epsilon chains, while a peripheral stalk is formed by the delta, b and b' chains.

It is found in the cellular thylakoid membrane. Its activity is regulated as follows. Inhibited by dicyclohexylcarbodiimide. In terms of biological role, f(1)F(0) ATP synthase produces ATP from ADP in the presence of a proton or sodium gradient. F-type ATPases consist of two structural domains, F(1) containing the extramembraneous catalytic core and F(0) containing the membrane proton channel, linked together by a central stalk and a peripheral stalk. During catalysis, ATP synthesis in the catalytic domain of F(1) is coupled via a rotary mechanism of the central stalk subunits to proton translocation. Its function is as follows. Key component of the F(0) channel; it plays a direct role in translocation across the membrane. A homomeric c-ring of between 10-14 subunits forms the central stalk rotor element with the F(1) delta and epsilon subunits. Functionally, the complex from the organism is particularly stable to disruption and remains functional after 6 hrs at 55 degrees Celsius. The protein is ATP synthase subunit c (atpE) of Thermosynechococcus vestitus (strain NIES-2133 / IAM M-273 / BP-1).